A 189-amino-acid polypeptide reads, in one-letter code: Nuclear distribution protein nudE homolog 1 (189 aa).

Residues 4-121 (NLDLETAIQI…LRVSKEEATS (118 aa)) are a coiled coil. The span at 114-126 (VSKEEATSGETRR) shows a compositional bias: basic and acidic residues. The interval 114-139 (VSKEEATSGETRRNTRSLPSQNKKMK) is disordered.

It belongs to the nudE family. As to quaternary structure, self-associates. Interacts with PAC1.

It is found in the nucleus. It localises to the cytoplasm. Its subcellular location is the cytoskeleton. Required for nuclear migration to the bud neck during cell division. Targets cytoplasmic dynein to microtubule plus ends thereby promoting dynein-mediated microtubule sliding along the bud cortex and consequently the movement of the mitotic spindle to the bud neck. In Saccharomyces cerevisiae (strain ATCC 204508 / S288c) (Baker's yeast), this protein is Nuclear distribution protein nudE homolog 1 (NDL1).